The following is a 1197-amino-acid chain: DNA-directed RNA polymerase subunit beta (1197 aa).

The span at 581–597 shows a compositional bias: polar residues; that stretch reads QANSPLNDDGSFTNPTV. Disordered regions lie at residues 581–603 and 1172–1197; these read QANS…RHGD and EKPD…EENV.

The protein belongs to the RNA polymerase beta chain family. The RNAP catalytic core consists of 2 alpha, 1 beta, 1 beta' and 1 omega subunit. When a sigma factor is associated with the core the holoenzyme is formed, which can initiate transcription.

The catalysed reaction is RNA(n) + a ribonucleoside 5'-triphosphate = RNA(n+1) + diphosphate. Its function is as follows. DNA-dependent RNA polymerase catalyzes the transcription of DNA into RNA using the four ribonucleoside triphosphates as substrates. In Oenococcus oeni (strain ATCC BAA-331 / PSU-1), this protein is DNA-directed RNA polymerase subunit beta.